We begin with the raw amino-acid sequence, 66 residues long: MRASLFIVIFVVSFITISCLSTDDEEARWIEKRGDCLPHLKLCKADKDCCSKKCKRRGTNPEKRCR.

An N-terminal signal peptide occupies residues 1–21 (MRASLFIVIFVVSFITISCLS). The propeptide occupies 22–33 (TDDEEARWIEKR). 3 cysteine pairs are disulfide-bonded: cysteine 36–cysteine 50, cysteine 43–cysteine 54, and cysteine 49–cysteine 65. The essential for stimulation of [3H]ryanodine binding to RYR1 stretch occupies residues 55 to 57 (KRR).

Belongs to the scorpion calcin family. Expressed by the venom gland.

The protein resides in the secreted. Its function is as follows. This toxin stabilizes ryanodine receptor 1 (RyR1) opening in a long-lasting subconductance state (20% and 38% of the full conductance state have been found). It promotes an increase in the opening probability at intermediate concentration. Furthermore, it triggers calcium release from sarcoplasmic vesicles (68 nM are enough to induce a sharp release, and 45% of the total calcium is released after toxin (100 nM) addition) probably by acting as a cell-penetrating peptide (CPP). In addition, it has been shown to dose-dependently stimulate ryanodine binding to RyR1 (EC(50)=6.9-71 nM). It also augments the bell-shaped calcium-[3H]ryanodine binding curve that is maximal at about 10 uM calcium concentration. It binds a different site as ryanodine. It acts synergistically with caffeine. In vivo, intracerebroventricular injection into mice induces neurotoxic symptoms, followed by death. This is Hemicalcin from Hemiscorpius lepturus (Scorpion).